A 349-amino-acid chain; its full sequence is Acyl-CoA Delta(11) desaturase (349 aa).

Helical transmembrane passes span 41–61 (FLTF…CFTS) and 66–86 (TLLF…AGAH). Positions 86 to 91 (HRLWTH) match the Histidine box-1 motif. The short motif at 123–127 (HRLHH) is the Histidine box-2 element. A helical membrane pass occupies residues 184–204 (AVPLIGTVCFALPTLIPVYCW). Residues 263-267 (HNYHH) carry the Histidine box-3 motif. Residues 282 to 302 (FLNLTTLFIDFCAWFGWAYDL) form a helical membrane-spanning segment.

This sequence belongs to the fatty acid desaturase type 1 family. Fe cation is required as a cofactor. In terms of tissue distribution, adult female pheromone gland. Increases by two or three orders of magnitude during the first 2 days after adult eclosion.

The protein resides in the endoplasmic reticulum membrane. The enzyme catalyses an 11,12-saturated fatty acyl-CoA + 2 Fe(II)-[cytochrome b5] + O2 + 2 H(+) = an (11Z)-Delta(11)-fatty acyl-CoA + 2 Fe(III)-[cytochrome b5] + 2 H2O. Functionally, catalyzes the formation of Delta(11) fatty acyl precursors in the pheromone gland. The sequence is that of Acyl-CoA Delta(11) desaturase (D11DS) from Trichoplusia ni (Cabbage looper).